The primary structure comprises 365 residues: MNIATKLMASLVASVVLTACSGGGSSGSSSKPNSELTPKVDMSAPKAEQPKKEEVPQADNSKAEEPKEMAPQVDSPKAEEPKNMAPQMGNPKLNDPQVMAPKMDNPQKDAPKGEELSKDKSNAEILKELGVKDINSGIINNADVVLNLKIDEKDHITVVLDKGKINRNHLKVTNTISAQDIKTLKDSSGKLLGYYGYMQLNQVRQDENYSDEKVSLNEYYLLSMNDADKIRPTKSISYKGDMFYSYKDVGNQKLKASVEASYDDVTKKVSMKVFGENNDYWKLGEFGRTNLLENQVTGAKVGEDGTIINGTLYSKIDNFPLKLTPDANFSGGIFGKNGEVLAGSAISEKWQGVIGATATTKEDKK.

A signal peptide spans 1 to 19 (MNIATKLMASLVASVVLTA). The segment at 19–121 (ACSGGGSSGS…KGEELSKDKS (103 aa)) is disordered. Cysteine 20 is lipidated: N-palmitoyl cysteine. The S-diacylglycerol cysteine moiety is linked to residue cysteine 20. 2 stretches are compositionally biased toward basic and acidic residues: residues 48–68 (EQPK…EPKE) and 105–121 (NPQK…KDKS).

The protein localises to the cell outer membrane. The chain is Outer membrane lipoprotein A (omlA) from Actinobacillus pleuropneumoniae (Haemophilus pleuropneumoniae).